We begin with the raw amino-acid sequence, 446 residues long: Kynurenine 3-monooxygenase (446 aa).

The protein belongs to the aromatic-ring hydroxylase family. KMO subfamily. The cofactor is FAD.

It carries out the reaction L-kynurenine + NADPH + O2 + H(+) = 3-hydroxy-L-kynurenine + NADP(+) + H2O. It functions in the pathway cofactor biosynthesis; NAD(+) biosynthesis; quinolinate from L-kynurenine: step 1/3. Catalyzes the hydroxylation of L-kynurenine (L-Kyn) to form 3-hydroxy-L-kynurenine (L-3OHKyn). Required for synthesis of quinolinic acid. The sequence is that of Kynurenine 3-monooxygenase from Flavobacterium johnsoniae (strain ATCC 17061 / DSM 2064 / JCM 8514 / BCRC 14874 / CCUG 350202 / NBRC 14942 / NCIMB 11054 / UW101) (Cytophaga johnsonae).